The chain runs to 571 residues: Dehydrocurvularin exporter (571 aa).

The segment at 1-34 is disordered; sequence MADGSDLENNHKPELDRSQPGSTSNGSQEQKDPD. Over residues 8–17 the composition is skewed to basic and acidic residues; the sequence is ENNHKPELDR. The segment covering 19–28 has biased composition (polar residues); sequence QPGSTSNGSQ. Asn25 is a glycosylation site (N-linked (GlcNAc...) asparagine). 14 helical membrane-spanning segments follow: residues 47–67, 86–106, 120–140, 143–163, 171–191, 202–222, 238–258, 275–295, 317–337, 350–370, 379–399, 405–425, 443–463, and 514–534; these read ILVM…IGII, WYGS…GKLF, FIFL…SVII, AIQG…INYV, LLIG…PVIG, WCFW…LLFL, IILA…VCLT, VIAT…TEWF, LFCL…PIYF, VNTL…GGVI, FELL…ILDV, MYIG…QIPM, IMVM…QSLF, and VFAF…IIPF. The tract at residues 538–571 is disordered; it reads PDHGKKDKPATEEAAEEKSEAEGKVSGDKEENHS.

The protein belongs to the major facilitator superfamily. TCR/Tet family.

Its subcellular location is the cell membrane. Functionally, efflux pump that is probably involved in the export of dehydrocurvularin. This is Dehydrocurvularin exporter from Aspergillus terreus.